Here is a 208-residue protein sequence, read N- to C-terminus: Granulocyte colony-stimulating factor (208 aa).

An N-terminal signal peptide occupies residues 1–30; the sequence is MAQLSAQRRMKLMALQLLLWQSALWSGREA. 2 cysteine pairs are disulfide-bonded: Cys72-Cys78 and Cys100-Cys110. A glycan (O-linked (GalNAc...) threonine) is linked at Thr169.

It belongs to the IL-6 superfamily. Monomer. O-glycosylated.

The protein resides in the secreted. Granulocyte/macrophage colony-stimulating factors are cytokines that act in hematopoiesis by controlling the production, differentiation, and function of 2 related white cell populations of the blood, the granulocytes and the monocytes-macrophages. This CSF induces granulocytes. This Mus musculus (Mouse) protein is Granulocyte colony-stimulating factor (Csf3).